The following is a 551-amino-acid chain: Formate--tetrahydrofolate ligase (551 aa).

61-68 (TPAGEGKS) is a binding site for ATP.

This sequence belongs to the formate--tetrahydrofolate ligase family.

It carries out the reaction (6S)-5,6,7,8-tetrahydrofolate + formate + ATP = (6R)-10-formyltetrahydrofolate + ADP + phosphate. The protein operates within one-carbon metabolism; tetrahydrofolate interconversion. The protein is Formate--tetrahydrofolate ligase of Lactiplantibacillus plantarum (strain ATCC BAA-793 / NCIMB 8826 / WCFS1) (Lactobacillus plantarum).